We begin with the raw amino-acid sequence, 233 residues long: Maternal B9.15 protein (233 aa).

Residues 135-165 (KATSDYHSGTSSDEEPTNKEPKTIPKVSNPN) are disordered.

This sequence belongs to the BTG family.

The sequence is that of Maternal B9.15 protein from Xenopus laevis (African clawed frog).